Consider the following 431-residue polypeptide: Fumarylacetoacetase fahA (431 aa).

Asp-133 is a Ca(2+) binding site. Residue Tyr-135 coordinates substrate. Catalysis depends on His-140, which acts as the Proton acceptor. Position 149 (Arg-149) interacts with substrate. Positions 209, 211, and 243 each coordinate Ca(2+). Asp-243 provides a ligand contact to Mg(2+). Substrate contacts are provided by Gln-250 and Tyr-254. 2 residues coordinate Mg(2+): Lys-263 and Thr-267. A substrate-binding site is contributed by Thr-362. Polar residues predominate over residues 362–381 (TISGKENQTQGSLLEQTNGK). The interval 362 to 382 (TISGKENQTQGSLLEQTNGKN) is disordered.

It belongs to the FAH family. Ca(2+) is required as a cofactor. Requires Mg(2+) as cofactor.

The enzyme catalyses 4-fumarylacetoacetate + H2O = acetoacetate + fumarate + H(+). It functions in the pathway amino-acid degradation; L-phenylalanine degradation; acetoacetate and fumarate from L-phenylalanine: step 6/6. Functionally, fumarylacetoacetase; part of the L-tyrosine degradation gene cluster that mediates the biosynthesis of the brownish pigment pyomelanin as an alternative melanin. The 4-hydroxyphenylpyruvate dioxygenase hppD catalyzes the conversion of 4-hydroxyphenylpyruvate to homogentisic acid (HGA). The protein hmgX is crucial for this conversion and thus, probably functions as an accessory factor to mediate specific activity of hppD. The homogentisate 1,2-dioxygenase hmgA is then involved in the cleavage of the aromatic ring of HGA and its conversion to 4-maleylacetoacetate. When hmgA activity is lowered by the cell wall integrity (CWI) signaling pathway, HGA accumulates and leads to the production of pyomelanin through benzoquinone acetic acid after oxidation and polymerization. On the opposite, in non-stress conditions, both hppD and hmgA activities are balanced and HGA is degraded into 4-maleylacetoacetate. 4-maleylacetoacetate is further converted to 4-fumarylacetoacetate by the maleylacetoacetate isomerase maiA, which is degraded into fumarate and acetoacetate by the fumarylacetoacetase fahA. The protein is Fumarylacetoacetase fahA of Aspergillus fumigatus (strain ATCC MYA-4609 / CBS 101355 / FGSC A1100 / Af293) (Neosartorya fumigata).